Here is a 206-residue protein sequence, read N- to C-terminus: Small ribosomal subunit protein uS4A (206 aa).

The S4 RNA-binding domain occupies 98 to 164 (MRLDNVVYKL…EKFKTFAENP (67 aa)).

The protein belongs to the universal ribosomal protein uS4 family. As to quaternary structure, part of the 30S ribosomal subunit. Contacts protein S5. The interaction surface between S4 and S5 is involved in control of translational fidelity.

Its function is as follows. One of the primary rRNA binding proteins, it binds directly to 16S rRNA where it nucleates assembly of the body of the 30S subunit. In terms of biological role, with S5 and S12 plays an important role in translational accuracy. This Clostridium novyi (strain NT) protein is Small ribosomal subunit protein uS4A.